We begin with the raw amino-acid sequence, 108 residues long: Thiosulfate sulfurtransferase GlpE (108 aa).

Residues 17–105 (HQGAAVLVDI…WHRHFPADVA (89 aa)) enclose the Rhodanese domain. C65 functions as the Cysteine persulfide intermediate in the catalytic mechanism.

It belongs to the GlpE family.

Its subcellular location is the cytoplasm. The catalysed reaction is thiosulfate + hydrogen cyanide = thiocyanate + sulfite + 2 H(+). The enzyme catalyses thiosulfate + [thioredoxin]-dithiol = [thioredoxin]-disulfide + hydrogen sulfide + sulfite + 2 H(+). Its function is as follows. Transferase that catalyzes the transfer of sulfur from thiosulfate to thiophilic acceptors such as cyanide or dithiols. May function in a CysM-independent thiosulfate assimilation pathway by catalyzing the conversion of thiosulfate to sulfite, which can then be used for L-cysteine biosynthesis. The polypeptide is Thiosulfate sulfurtransferase GlpE (Salmonella arizonae (strain ATCC BAA-731 / CDC346-86 / RSK2980)).